The chain runs to 321 residues: MNVSVKSLRGVSRTWRSFSSRQGMNVFDRSMKRRQKDWASSLLDSSKYDYLREEVGSRVADRVYDVARTFPLALDVGCGRSHIAEHLSKEVVERLFLTDISSSSLRNRKTSDIPAQCVMADEEFLPFKENTFDLVLSSLSMHWINDLPGALRQIHQVLKPDGVFIGAMVGGETLYELRCSLQLAELEREGGFAPHISPYTAVTDLGNLLGQAGFNMLTVDIDEVQVNYPGMLEVMRDLQGMGESNCAWNRKLLLQRDTMLAAAAIYKEMYGNEDGSVPATFQILYMIGWKPHDSQAKPAKRGSANVSFADLSKIGKLQSDQ.

The transit peptide at 1–25 (MNVSVKSLRGVSRTWRSFSSRQGMN) directs the protein to the mitochondrion.

It belongs to the methyltransferase superfamily. Interacts with NDUFS7.

It is found in the mitochondrion inner membrane. In terms of biological role, arginine hydroxylase that mediates hydroxylation of 'Arg-111' of NDUFS7 and is involved in the assembly of mitochondrial NADH:ubiquinone oxidoreductase complex (complex I, MT-ND1) at early stages. May also have methyltransferase activity. This chain is Arginine-hydroxylase NDUFAF5, mitochondrial, found in Danio rerio (Zebrafish).